A 1230-amino-acid polypeptide reads, in one-letter code: ATP-dependent helicase/nuclease subunit A (1230 aa).

The UvrD-like helicase ATP-binding domain maps to 9–480; it reads STWTDDQWKA…IDLNKNFRSR (472 aa). 30–37 contributes to the ATP binding site; that stretch reads AAAGSGKT. In terms of domain architecture, UvrD-like helicase C-terminal spans 507-796; the sequence is QAELKLGASY…RLMTIHSSKG (290 aa).

This sequence belongs to the helicase family. AddA subfamily. As to quaternary structure, heterodimer of AddA and AddB/RexB. Mg(2+) is required as a cofactor.

The enzyme catalyses Couples ATP hydrolysis with the unwinding of duplex DNA by translocating in the 3'-5' direction.. The catalysed reaction is ATP + H2O = ADP + phosphate + H(+). In terms of biological role, the heterodimer acts as both an ATP-dependent DNA helicase and an ATP-dependent, dual-direction single-stranded exonuclease. Recognizes the chi site generating a DNA molecule suitable for the initiation of homologous recombination. The AddA nuclease domain is required for chi fragment generation; this subunit has the helicase and 3' -&gt; 5' nuclease activities. The polypeptide is ATP-dependent helicase/nuclease subunit A (Bacillus licheniformis (strain ATCC 14580 / DSM 13 / JCM 2505 / CCUG 7422 / NBRC 12200 / NCIMB 9375 / NCTC 10341 / NRRL NRS-1264 / Gibson 46)).